A 625-amino-acid chain; its full sequence is Threonine--tRNA ligase (625 aa).

Positions 1–149 (MRVLLIHAKR…RNYEAKTTAR (149 aa)) are editing domain. Catalytic regions lie at residues 197–494 (NPVN…PYIP) and 198–494 (PVNK…PYIP). Zn(2+) contacts are provided by Cys-291, His-342, and His-463.

This sequence belongs to the class-II aminoacyl-tRNA synthetase family. In terms of assembly, homodimer. The cofactor is Zn(2+).

Its subcellular location is the cytoplasm. The enzyme catalyses tRNA(Thr) + L-threonine + ATP = L-threonyl-tRNA(Thr) + AMP + diphosphate + H(+). Functionally, catalyzes the attachment of threonine to tRNA(Thr) in a two-step reaction: L-threonine is first activated by ATP to form Thr-AMP and then transferred to the acceptor end of tRNA(Thr). Also edits incorrectly charged L-seryl-tRNA(Thr). In Hyperthermus butylicus (strain DSM 5456 / JCM 9403 / PLM1-5), this protein is Threonine--tRNA ligase.